The chain runs to 286 residues: Polyamine aminopropyltransferase 1 (286 aa).

In terms of domain architecture, PABS spans 1–235 (MSDYQETLYQ…GAMTFAWGST (235 aa)). Gln30 lines the S-methyl-5'-thioadenosine pocket. Positions 61 and 85 each coordinate spermidine. S-methyl-5'-thioadenosine is bound by residues Glu105 and 137–138 (DG). Asp155 (proton acceptor) is an active-site residue. Spermidine is bound at residue 155–158 (DSTD). Position 162 (Pro162) interacts with S-methyl-5'-thioadenosine.

The protein belongs to the spermidine/spermine synthase family. Homodimer or homotetramer.

Its subcellular location is the cytoplasm. It catalyses the reaction S-adenosyl 3-(methylsulfanyl)propylamine + putrescine = S-methyl-5'-thioadenosine + spermidine + H(+). It participates in amine and polyamine biosynthesis; spermidine biosynthesis; spermidine from putrescine: step 1/1. Functionally, catalyzes the irreversible transfer of a propylamine group from the amino donor S-adenosylmethioninamine (decarboxy-AdoMet) to putrescine (1,4-diaminobutane) to yield spermidine. The sequence is that of Polyamine aminopropyltransferase 1 from Pseudomonas aeruginosa (strain ATCC 15692 / DSM 22644 / CIP 104116 / JCM 14847 / LMG 12228 / 1C / PRS 101 / PAO1).